The following is a 177-amino-acid chain: Iron-sulfur cluster assembly protein SufA (177 aa).

The N-terminal stretch at 1 to 18 (MTIHIFLCFLLILKIVNA) is a signal peptide. Positions 101, 169, and 171 each coordinate [4Fe-4S] cluster.

Belongs to the HesB/IscA family. As to quaternary structure, homodimer. Homotetramer formation is observed in vitro.

The protein localises to the plastid. The protein resides in the apicoplast. Its pathway is cofactor biosynthesis; iron-sulfur cluster biosynthesis. Its function is as follows. Participates in the sulfur mobilization (SUF) pathway for iron-sulfur (Fe-S) cluster biogenesis. Involved in the pre-assembly of [4Fe-4S] clusters and their transfer to target proteins. This chain is Iron-sulfur cluster assembly protein SufA, found in Plasmodium falciparum (isolate 3D7).